The chain runs to 328 residues: Tetraacyldisaccharide 4'-kinase (328 aa).

55–62 contributes to the ATP binding site; it reads TAGGNGKT.

The protein belongs to the LpxK family.

It carries out the reaction a lipid A disaccharide + ATP = a lipid IVA + ADP + H(+). It participates in glycolipid biosynthesis; lipid IV(A) biosynthesis; lipid IV(A) from (3R)-3-hydroxytetradecanoyl-[acyl-carrier-protein] and UDP-N-acetyl-alpha-D-glucosamine: step 6/6. Its function is as follows. Transfers the gamma-phosphate of ATP to the 4'-position of a tetraacyldisaccharide 1-phosphate intermediate (termed DS-1-P) to form tetraacyldisaccharide 1,4'-bis-phosphate (lipid IVA). The protein is Tetraacyldisaccharide 4'-kinase of Escherichia coli O157:H7.